The primary structure comprises 532 residues: Arginine--tRNA ligase (532 aa).

Residues 122–132 carry the 'HIGH' region motif; the sequence is ANPTGPLHVAS.

It belongs to the class-I aminoacyl-tRNA synthetase family. As to quaternary structure, monomer.

The protein localises to the cytoplasm. It catalyses the reaction tRNA(Arg) + L-arginine + ATP = L-arginyl-tRNA(Arg) + AMP + diphosphate. This chain is Arginine--tRNA ligase, found in Elusimicrobium minutum (strain Pei191).